We begin with the raw amino-acid sequence, 303 residues long: Phosphoribosylaminoimidazole-succinocarboxamide synthase (303 aa).

This sequence belongs to the SAICAR synthetase family.

The enzyme catalyses 5-amino-1-(5-phospho-D-ribosyl)imidazole-4-carboxylate + L-aspartate + ATP = (2S)-2-[5-amino-1-(5-phospho-beta-D-ribosyl)imidazole-4-carboxamido]succinate + ADP + phosphate + 2 H(+). The protein operates within purine metabolism; IMP biosynthesis via de novo pathway; 5-amino-1-(5-phospho-D-ribosyl)imidazole-4-carboxamide from 5-amino-1-(5-phospho-D-ribosyl)imidazole-4-carboxylate: step 1/2. This Pichia angusta (Yeast) protein is Phosphoribosylaminoimidazole-succinocarboxamide synthase (ADE1).